Here is a 343-residue protein sequence, read N- to C-terminus: Membrane progestin receptor delta (343 aa).

Residues 1 to 49 (MLSLKMPQLLRVHQVPRVFWEEGIMSGYRCPTSSALDCVLSSFQMTNET) are Cytoplasmic-facing. The chain crosses the membrane as a helical span at residues 50 to 70 (VNIWTHFLPTWYFLWRLLALG). Residues 71–79 (SPGFRADPY) lie on the Extracellular side of the membrane. The chain crosses the membrane as a helical span at residues 80 to 100 (HLPLLVFLLPACLYPFASCCA). The Cytoplasmic portion of the chain corresponds to 101 to 112 (HTFSSMSPRARH). Residues 113 to 133 (ICYFLDYGALSLYSLGCAFPY) form a helical membrane-spanning segment. Over 134–146 (AAYSMPASWLHSR) the chain is Extracellular. Residues 147–167 (LHQLFVPAAALNSFLCTGLSC) traverse the membrane as a helical segment. Residues 168–216 (YSRFPELEYPGFSKALRTAAFAYPFLFDNLPLFYRLRLCWGGAHSCGRD) lie on the Cytoplasmic side of the membrane. The helical transmembrane segment at 217 to 237 (ALSSNHGYHLLCALLSGFLFA) threads the bilayer. The Extracellular segment spans residues 238–257 (ARLPERLAPGRFDYIGHSHQ). A helical transmembrane segment spans residues 258 to 278 (LFHICAVLGTHFQLEAVLADM). The Cytoplasmic segment spans residues 279-291 (GSRRAWLAVQEPT). The helical transmembrane segment at 292–312 (LGLGATVATLSLAVIGNLFII) threads the bilayer. Residues 313–343 (AAFTASLLRMPGPCPLLQGSPLEEGLQAKQQ) lie on the Extracellular side of the membrane.

It belongs to the ADIPOR family. Homodimer.

It is found in the cell membrane. Functionally, plasma membrane progesterone (P4) receptor coupled to G proteins. Seems to act through a G(s) mediated pathway. Involved in neurosteroid inhibition of apoptosis. May be involved in regulating rapid P4 signaling in the nervous system. Also binds dehydroepiandrosterone (DHEA), pregnanolone, pregnenolone and allopregnanolone. The polypeptide is Membrane progestin receptor delta (Mus musculus (Mouse)).